Reading from the N-terminus, the 439-residue chain is Tryptophan synthase beta chain 2 (439 aa).

Lysine 99 bears the N6-(pyridoxal phosphate)lysine mark.

Belongs to the TrpB family. As to quaternary structure, tetramer of two alpha and two beta chains. Pyridoxal 5'-phosphate is required as a cofactor.

It carries out the reaction (1S,2R)-1-C-(indol-3-yl)glycerol 3-phosphate + L-serine = D-glyceraldehyde 3-phosphate + L-tryptophan + H2O. The protein operates within amino-acid biosynthesis; L-tryptophan biosynthesis; L-tryptophan from chorismate: step 5/5. The beta subunit is responsible for the synthesis of L-tryptophan from indole and L-serine. In Corynebacterium efficiens (strain DSM 44549 / YS-314 / AJ 12310 / JCM 11189 / NBRC 100395), this protein is Tryptophan synthase beta chain 2 (trpB2).